The following is a 1491-amino-acid chain: Membrane-associated guanylate kinase, WW and PDZ domain-containing protein 1 (1491 aa).

One can recognise a PDZ 1 domain in the interval 17–105; that stretch reads ECTVKRGPQG…AVTFKAVRQG (89 aa). A Guanylate kinase-like domain is found at 96-287; it reads AVTFKAVRQG…APITDPSQKF (192 aa). Residue 103-110 participates in ATP binding; that stretch reads RQGGRLNK. The segment at 236–267 is disordered; it reads AENEEEDDVPEMNSSFTADSGEQEEHTLQETA. Positions 300-333 constitute a WW 1 domain; that stretch reads GPLPENWEMAYTENGEVYFIDHNTKTTSWLDPRC. Ser-357 is modified (phosphoserine). The WW 2 domain maps to 359–392; that stretch reads LELPAGWEKIEDPVYGIYYVDHINRKTQYENPVL. Residues 411-421 are compositionally biased toward low complexity; sequence QQQQQQQQQQQ. Residues 411–462 form a disordered region; the sequence is QQQQQQQQQQQTEEWTEDHSALVPPVIPNHPPSNPEPAREVPLQGKPFFTRN. Residues 435–445 show a composition bias toward pro residues; sequence PVIPNHPPSNP. The 83-residue stretch at 472-554 folds into the PDZ 2 domain; that stretch reads HTKLRKSSRG…GASVDLELCR (83 aa). Over residues 586-600 the composition is skewed to polar residues; the sequence is QETYDSPASHSSKTG. Disordered stretches follow at residues 586 to 623, 720 to 832, and 932 to 987; these read QETY…SSHG, QRGG…FGEC, and TENE…GGGS. In terms of domain architecture, PDZ 3 spans 643–721; the sequence is TVHIVKGPMG…GSEVTLLVQR (79 aa). Residues Ser-730 and Ser-741 each carry the phosphoserine modification. Over residues 742 to 752 the composition is skewed to low complexity; sequence QNSSQHSVSSH. Polar residues predominate over residues 756-766; the sequence is HTASPSHSTQV. The residue at position 800 (Ser-800) is a Phosphoserine. In terms of domain architecture, PDZ 4 spans 813 to 895; it reads SGLSKGERER…DELICVDGTP (83 aa). The span at 939–951 shows a compositional bias: polar residues; sequence PASSHHSSNQPAS. One can recognise a PDZ 5 domain in the interval 970 to 1066; that stretch reads SSGSGSTSGI…DRILAVNGCS (97 aa). Residues 970–1066 form an interaction with FCHSD2 region; the sequence is SSGSGSTSGI…DRILAVNGCS (97 aa). Positions 975-987 are enriched in gly residues; the sequence is STSGIGSGGGGGS. The residue at position 1071 (Ser-1071) is a Phosphoserine. Over residues 1112 to 1130 the composition is skewed to polar residues; sequence TTTHTPSQQGTQETRNTTK. Disordered stretches follow at residues 1112-1143 and 1234-1491; these read TTTH…KAPQ and DGSV…DLSI. One can recognise a PDZ 6 domain in the interval 1124–1206; the sequence is ETRNTTKPKQ…DEILEINGET (83 aa). 3 stretches are compositionally biased toward basic and acidic residues: residues 1278–1338, 1354–1396, and 1403–1491; these read DLHK…DAQA, KRRE…DGSP, and LERL…DLSI. A phosphoserine mark is found at Ser-1361 and Ser-1412.

As to quaternary structure, part of a complex composed of AMOTL2, MAGI1 and CDH5, within the complex AMOTL2 acts as a scaffold protein for the interaction of MAGI1 with CDH5. The complex is required for coupling actin fibers to cell junctions in endothelial cells. Interacts through its WW 2 domain with SYNPO and through its PDZ 5 domain with ACTN4. Interacts with cytoplasmic domain of ADGRB1. Interacts via its WW domains with DRPLA. Interacts with ESAM, LRP2 and CXADR. May interact with CTNNB1. Interacts through its PDZ 1 domain with NET1. Interacts with ASIC3 and AMOT. Interacts with FCHSD2. Interacts with IGSF5/JAM4 and through its PDZ 2 and 3 domains with NPHS1 forming a tripartite complex. Interacts with DDN. Interacts with DLL1. Interacts with KCNJ10 and possibly with KCNJ10/KCNJ16 heterodimer; this interaction may facilitate KCNJ10/KCNJ16 potassium channel expression at the basolateral membrane in kidney tubular cells. Interacts with PRRG4 (via cytoplasmic domain). In terms of assembly, interacts (via PDZ domain) with RAPGEF2. In terms of tissue distribution, widely expressed with the exception of skeletal muscle. Isoform 1, isoform 2 and isoform 6 are highly expressed in colon, kidney, lung, liver, and pancreas. Isoform 5 is predominantly expressed in brain and heart. Isoform 3 and isoform 4 are highly expressed in pancreas and brain.

Its subcellular location is the cell junction. It localises to the tight junction. The protein resides in the cell membrane. Plays a role in coupling actin fibers to cell junctions in endothelial cells, via its interaction with AMOTL2 and CDH5. May regulate acid-induced ASIC3 currents by modulating its expression at the cell surface. The polypeptide is Membrane-associated guanylate kinase, WW and PDZ domain-containing protein 1 (MAGI1) (Homo sapiens (Human)).